We begin with the raw amino-acid sequence, 341 residues long: Terpene synthase 9 (341 aa).

The short motif at Asp81–Ser86 is the DDxx(x)D/E motif element. The NDxxSxxxD/E motif signature appears at Asn222–Glu230.

Belongs to the terpene synthase family.

The enzyme catalyses (2E,6E)-farnesyl diphosphate = (1S,2S,4R)-beta-elemene + diphosphate. It catalyses the reaction (2E,6E)-farnesyl diphosphate = germacrene D + diphosphate. Functionally, terpene synthase that converts its substrate farnesyl diphosphate (FPP) into the sesquiterpenes beta-elemene, germacrene D and a yet unidentified sesquiterpene. This chain is Terpene synthase 9, found in Dictyostelium purpureum (Slime mold).